The following is an 81-amino-acid chain: UPF0181 protein Spro_2806 (81 aa).

The interval 43–81 (EKHQGDQVSVMFDDEDDDEEYQERPDDQADDDSEEDENY) is disordered. 2 stretches are compositionally biased toward acidic residues: residues 54-63 (FDDEDDDEEY) and 70-81 (QADDDSEEDENY).

The protein belongs to the UPF0181 family.

The chain is UPF0181 protein Spro_2806 from Serratia proteamaculans (strain 568).